The following is a 180-amino-acid chain: CASP-like protein XL3 (180 aa).

The Cytoplasmic segment spans residues 1-7; sequence MELSIQK. Residues 8–28 traverse the membrane as a helical segment; it reads IEALIRLSTIVMLVLTACLIG. Residues 29–49 are Extracellular-facing; that stretch reads LDSQTKVIFYVQKKASFKDLR. The helical transmembrane segment at 50-70 threads the bilayer; sequence ALVGLLYITSLAAAYNLLQLC. The Cytoplasmic portion of the chain corresponds to 71–98; that stretch reads CSSFSASYKGTSLQSYAYLAWLRYILDQ. The helical transmembrane segment at 99–119 threads the bilayer; the sequence is AVVYAVFAGNLAALEHSFLVL. Residues 120–140 lie on the Extracellular side of the membrane; that stretch reads TGEENFQWLKWCNKYTRFCTQ. The chain crosses the membrane as a helical span at residues 141-161; that stretch reads IGGSLLCGFVASLLMFSIASI. Residues 162-180 lie on the Cytoplasmic side of the membrane; the sequence is SAFNLFRQYSPTKFMHLKL.

Belongs to the Casparian strip membrane proteins (CASP) family. As to quaternary structure, homodimer and heterodimers.

The protein resides in the cell membrane. This Gossypium hirsutum (Upland cotton) protein is CASP-like protein XL3 (XL3).